Here is a 65-residue protein sequence, read N- to C-terminus: Large ribosomal subunit protein uL30 (65 aa).

This sequence belongs to the universal ribosomal protein uL30 family. As to quaternary structure, part of the 50S ribosomal subunit.

This is Large ribosomal subunit protein uL30 from Desulfosudis oleivorans (strain DSM 6200 / JCM 39069 / Hxd3) (Desulfococcus oleovorans).